A 289-amino-acid chain; its full sequence is Protease HtpX homolog (289 aa).

The next 2 membrane-spanning stretches (helical) occupy residues 11–31 (AALF…IGAG) and 36–54 (APIW…YGYW). H138 serves as a coordination point for Zn(2+). E139 is an active-site residue. H142 lines the Zn(2+) pocket. The next 2 membrane-spanning stretches (helical) occupy residues 153–173 (VAAA…FFGG) and 182–202 (LAMI…QMAI). Position 207 (E207) interacts with Zn(2+).

This sequence belongs to the peptidase M48B family. The cofactor is Zn(2+).

The protein localises to the cell membrane. This is Protease HtpX homolog from Pseudarthrobacter chlorophenolicus (strain ATCC 700700 / DSM 12829 / CIP 107037 / JCM 12360 / KCTC 9906 / NCIMB 13794 / A6) (Arthrobacter chlorophenolicus).